The following is a 527-amino-acid chain: Tubulin-specific chaperone E (527 aa).

S2 carries the N-acetylserine modification. Residues 27–71 form the CAP-Gly domain; that stretch reads GVVPPVAGPWLGVEWDNPERGKHDGSHEGTVYFKCRHPTGGSFIR. LRR repeat units lie at residues 154-175, 180-200, 205-226, 230-252, 253-274, 278-299, and 308-329; these read NIRKVDLSKNLLSSWDEVIHIA, HLEVLNVSENKLKFPSGSVLT, VLKVLVLNQTGITWAEVLRCVA, GLEELYLESNNIFISERPTDVLQ, TVKLLDLSSNQLIDENQLYLIA, RLEQLILSDTGISSLHFPDAGI, and SLKYLVVNDNQISQWSFFNELE. Residues 342–384 enclose the LRRCT domain; the sequence is NPLTKEDKEAETARLLIIASIGQLKTLNKCEILPEERRRAELD. N6-acetyllysine is present on K463. S495 is subject to Phosphoserine.

It belongs to the TBCE family. In terms of assembly, supercomplex made of cofactors A to E. Cofactors A and D function by capturing and stabilizing tubulin in a quasi-native conformation. Cofactor E binds to the cofactor D-tubulin complex; interaction with cofactor C then causes the release of tubulin polypeptides that are committed to the native state. Cofactors B and E can form a heterodimer which binds to alpha-tubulin and enhances their ability to dissociate tubulin heterodimers. Interacts with TBCD.

The protein resides in the cytoplasm. It is found in the cytoskeleton. In terms of biological role, tubulin-folding protein; involved in the second step of the tubulin folding pathway and in the regulation of tubulin heterodimer dissociation. Required for correct organization of microtubule cytoskeleton and mitotic splindle, and maintenance of the neuronal microtubule network. The polypeptide is Tubulin-specific chaperone E (TBCE) (Homo sapiens (Human)).